Reading from the N-terminus, the 143-residue chain is Antiholin-like protein LrgA (143 aa).

4 helical membrane passes run 6–26, 30–50, 61–81, and 97–117; these read VYSF…SNII, LPIP…LLCL, LGTA…ISVI, and VIVV…QFIL.

It belongs to the CidA/LrgA family. LrgA subfamily.

It is found in the cell membrane. Its function is as follows. Inhibits the expression or activity of extracellular murein hydrolases by interacting, possibly with LrgB, with the holin-like protein CidA. The LrgAB and CidA proteins may affect the proton motive force of the membrane. May be involved in programmed cell death (PCD), possibly triggering PCD in response to antibiotics and environmental stresses. The chain is Antiholin-like protein LrgA from Bacillus cereus (strain AH187).